Here is a 332-residue protein sequence, read N- to C-terminus: GTP 3',8-cyclase (332 aa).

The region spanning 9–220 is the Radical SAM core domain; that stretch reads RFARKVDYLR…DQVRERIAER (212 aa). Arginine 18 contributes to the GTP binding site. Cysteine 25 and cysteine 29 together coordinate [4Fe-4S] cluster. Tyrosine 31 provides a ligand contact to S-adenosyl-L-methionine. A [4Fe-4S] cluster-binding site is contributed by cysteine 32. Arginine 67 is a binding site for GTP. Position 71 (glycine 71) interacts with S-adenosyl-L-methionine. A GTP-binding site is contributed by threonine 98. Serine 122 is a binding site for S-adenosyl-L-methionine. Lysine 159 serves as a coordination point for GTP. Methionine 193 provides a ligand contact to S-adenosyl-L-methionine. Positions 258 and 261 each coordinate [4Fe-4S] cluster. 263–265 is a GTP binding site; the sequence is RVR. [4Fe-4S] cluster is bound at residue cysteine 275.

This sequence belongs to the radical SAM superfamily. MoaA family. As to quaternary structure, monomer and homodimer. It depends on [4Fe-4S] cluster as a cofactor.

It catalyses the reaction GTP + AH2 + S-adenosyl-L-methionine = (8S)-3',8-cyclo-7,8-dihydroguanosine 5'-triphosphate + 5'-deoxyadenosine + L-methionine + A + H(+). It participates in cofactor biosynthesis; molybdopterin biosynthesis. Its function is as follows. Catalyzes the cyclization of GTP to (8S)-3',8-cyclo-7,8-dihydroguanosine 5'-triphosphate. The chain is GTP 3',8-cyclase from Pseudomonas syringae pv. syringae (strain B728a).